Reading from the N-terminus, the 288-residue chain is Protoheme IX farnesyltransferase 2 (288 aa).

8 helical membrane-spanning segments follow: residues 16-36 (IGVF…GAVP), 38-58 (FAPV…AGAF), 88-108 (LWPL…AFAA), 111-131 (WAAL…TVWL), 139-159 (IVIG…VAVP), 166-186 (LILA…LATA), 227-247 (AFFG…GWFL), and 266-286 (FFAS…EPLL).

This sequence belongs to the UbiA prenyltransferase family. Protoheme IX farnesyltransferase subfamily.

The protein localises to the cell inner membrane. It carries out the reaction heme b + (2E,6E)-farnesyl diphosphate + H2O = Fe(II)-heme o + diphosphate. It participates in porphyrin-containing compound metabolism; heme O biosynthesis; heme O from protoheme: step 1/1. Functionally, converts heme B (protoheme IX) to heme O by substitution of the vinyl group on carbon 2 of heme B porphyrin ring with a hydroxyethyl farnesyl side group. This chain is Protoheme IX farnesyltransferase 2, found in Paramagnetospirillum magneticum (strain ATCC 700264 / AMB-1) (Magnetospirillum magneticum).